The chain runs to 1220 residues: Cullin-associated NEDD8-dissociated protein 1 (1220 aa).

HEAT repeat units follow at residues 1–35 (MEEGILLKKYVESSDKDIRYMALSDLAARLNDANH), 42–79 (ESFPDTLDVLLQALSDASPEVQQEAVRCVAIISSKIPQ), 121–157 (FYTSTVFPSFLQILKQYNVAQEEFFAILCVVCDSLEI), 259–295 (ADYTNKILSLLKKEEAPDELTQKLLEVLGLLLEYQQV), 365–410 (LSRL…HVPR), 615–650 (IFLRRVLIILCKKLQEEPTRSAAARALCDIFMSVTD), 680–700 (TTAYLELLEVLLKVGQKYLAE), 701–737 (SLLEHILGLLIETLKRNTENTVAILKCLLIIPLSILL), 738–775 (KSKNLLIDTIISHLQSSTIHLNEESVCLLSRIIAVISK), 810–847 (FQSKAIVTSLNKSFMSPKSEVRIKVFTTLIFGQLDYGK), 850–887 (LPANEYFDTIASNLNSPNADVMKAAAIALGSLTSQSEK), and 1020–1057 (EVSQETLQVIISVIKNRRSCIADVYNELLQGLISKSSV).

The protein belongs to the CAND family.

The protein resides in the nucleus. In terms of biological role, key assembly factor of SCF (SKP1-CUL1-F-box protein) E3 ubiquitin ligase complexes that promotes the exchange of the substrate-recognition F-box subunit in SCF complexes, thereby playing a key role in the cellular repertoire of SCF complexes. Acts as a F-box protein exchange factor. This Schizosaccharomyces pombe (strain 972 / ATCC 24843) (Fission yeast) protein is Cullin-associated NEDD8-dissociated protein 1 (knd1).